A 145-amino-acid chain; its full sequence is Lipoprotein signal peptidase (145 aa).

A run of 2 helical transmembrane segments spans residues leucine 57–leucine 77 and glutamate 79–isoleucine 99. Active-site residues include aspartate 109 and aspartate 124. The chain crosses the membrane as a helical span at residues phenylalanine 120 to phenylalanine 140.

This sequence belongs to the peptidase A8 family.

Its subcellular location is the cell membrane. The enzyme catalyses Release of signal peptides from bacterial membrane prolipoproteins. Hydrolyzes -Xaa-Yaa-Zaa-|-(S,diacylglyceryl)Cys-, in which Xaa is hydrophobic (preferably Leu), and Yaa (Ala or Ser) and Zaa (Gly or Ala) have small, neutral side chains.. The protein operates within protein modification; lipoprotein biosynthesis (signal peptide cleavage). Functionally, this protein specifically catalyzes the removal of signal peptides from prolipoproteins. The sequence is that of Lipoprotein signal peptidase from Caldanaerobacter subterraneus subsp. tengcongensis (strain DSM 15242 / JCM 11007 / NBRC 100824 / MB4) (Thermoanaerobacter tengcongensis).